The primary structure comprises 64 residues: Large ribosomal subunit protein bL33 (64 aa).

This sequence belongs to the bacterial ribosomal protein bL33 family.

This is Large ribosomal subunit protein bL33 from Microcystis aeruginosa (strain NIES-843 / IAM M-2473).